The sequence spans 116 residues: Ribosome-binding factor A (116 aa).

The protein belongs to the RbfA family. Monomer. Binds 30S ribosomal subunits, but not 50S ribosomal subunits or 70S ribosomes.

The protein resides in the cytoplasm. Its function is as follows. One of several proteins that assist in the late maturation steps of the functional core of the 30S ribosomal subunit. Associates with free 30S ribosomal subunits (but not with 30S subunits that are part of 70S ribosomes or polysomes). Required for efficient processing of 16S rRNA. May interact with the 5'-terminal helix region of 16S rRNA. In Buchnera aphidicola subsp. Cinara cedri (strain Cc), this protein is Ribosome-binding factor A.